We begin with the raw amino-acid sequence, 224 residues long: Prolactin-2C3 (224 aa).

A signal peptide spans 1 to 29 (MLPSSIQPCSWILLLLLVNSSLLWKNVAS). N-linked (GlcNAc...) asparagine glycosylation occurs at asparagine 19. A disulfide bond links cysteine 33 and cysteine 40. N-linked (GlcNAc...) asparagine glycans are attached at residues asparagine 57, asparagine 75, and asparagine 88. 2 disulfide bridges follow: cysteine 87–cysteine 199 and cysteine 216–cysteine 224.

It belongs to the somatotropin/prolactin family. N-glycosylated and sialylated. In terms of tissue distribution, expressed in placenta and hair follicles, with highest expression levels detected in the outer root sheath and no expression detected in bulb. Expressed in placenta, skin wounds, keratinocytes and weakly in embryonic fibroblasts. Expressed in brain, cerebellum and in Neuro-2a cell line. Not detected in liver, kidney, ovary, pituitary gland and brain.

It is found in the secreted. The protein resides in the endoplasmic reticulum. In terms of biological role, may have a role in embryonic development. It is likely to provide a growth stimulus to target cells in maternal and fetal tissues during the development of the embryo at mid-gestation. May play a role during wound healing and in the hair follicle cycle as a growth factor and/or an angiogenesis factor. May play a role in microvilli formation and cell proliferation of neuroblastoma cells. The sequence is that of Prolactin-2C3 (Prl2c3) from Mus musculus (Mouse).